The sequence spans 136 residues: Large ribosomal subunit protein bL21 (136 aa).

A disordered region spans residues 107-136 (RAAADRKTAPKRASAKAAADQTTAAQATAE). The span at 121-136 (AKAAADQTTAAQATAE) shows a compositional bias: low complexity.

The protein belongs to the bacterial ribosomal protein bL21 family. As to quaternary structure, part of the 50S ribosomal subunit. Contacts protein L20.

In terms of biological role, this protein binds to 23S rRNA in the presence of protein L20. The sequence is that of Large ribosomal subunit protein bL21 from Acidothermus cellulolyticus (strain ATCC 43068 / DSM 8971 / 11B).